The sequence spans 485 residues: N-succinylglutamate 5-semialdehyde dehydrogenase 2 (485 aa).

221-226 provides a ligand contact to NAD(+); the sequence is GSAAAG. Active-site residues include glutamate 244 and cysteine 279.

This sequence belongs to the aldehyde dehydrogenase family. AstD subfamily.

It carries out the reaction N-succinyl-L-glutamate 5-semialdehyde + NAD(+) + H2O = N-succinyl-L-glutamate + NADH + 2 H(+). The protein operates within amino-acid degradation; L-arginine degradation via AST pathway; L-glutamate and succinate from L-arginine: step 4/5. In terms of biological role, catalyzes the NAD-dependent reduction of succinylglutamate semialdehyde into succinylglutamate. The sequence is that of N-succinylglutamate 5-semialdehyde dehydrogenase 2 from Caulobacter vibrioides (strain ATCC 19089 / CIP 103742 / CB 15) (Caulobacter crescentus).